The chain runs to 420 residues: MAELGKKYCVYCLAEVSPLRFRCTECQDIELCPECFSAGAEIGHHRRYHGYQLVDGGRFTLWGPEAEGGWTSREEQLLLDAIEQFGFGNWEDMAAHVGASRTPQEVMEHYVSMYIHGNLGKACIPDTIPNRVTDHTCPSGGPLSPSLTTPLPPLDISVAEQQQLGYMPLRDDYEIEYDQDAETLISGLSVNYDDDDVEIELKRAHVDMYVRKLKERQRRKNIARDYNLVPAFLGKDKKEKEKALKRKITKEEKELRLKLRPLYQFMSCKEFDDLFENMHKEKMLRAKIRELQRYRRNGITKMEESAEYEAARHKREKRKENKNLAGSKRGKEDGKDSEFAAIENLPGFELLSDREKVLCSSLNLSPARYVTVKTIIIKDHLQKRQGIPSKSRLPSYLDKVLKKRILNFLTESGWISRDAS.

The ZZ-type zinc-finger motif lies at 4-59 (LGKKYCVYCLAEVSPLRFRCTECQDIELCPECFSAGAEIGHHRRYHGYQLVDGGRF). Zn(2+)-binding residues include Cys9, Cys12, Cys23, Cys26, Cys32, Cys35, His45, and His49. The SANT domain occupies 65-118 (EAEGGWTSREEQLLLDAIEQFGFGNWEDMAAHVGASRTPQEVMEHYVSMYIHGN). Positions 305–335 (SAEYEAARHKREKRKENKNLAGSKRGKEDGK) are disordered.

In terms of assembly, interacts with GCN5L2, SMARCA4, SMARCE1 and PAX5. Component of the TFTC-HAT complex.

The protein resides in the nucleus. In terms of biological role, coactivates PAX5-dependent transcription together with either SMARCA4 or GCN5L2. In Homo sapiens (Human), this protein is Transcriptional adapter 2-beta (TADA2B).